Here is a 291-residue protein sequence, read N- to C-terminus: Nucleotide-binding protein EUBREC_0697 (291 aa).

8–15 serves as a coordination point for ATP; sequence GMSGAGKS. Residue 59–62 participates in GTP binding; it reads DVRN.

Belongs to the RapZ-like family.

Displays ATPase and GTPase activities. This chain is Nucleotide-binding protein EUBREC_0697, found in Agathobacter rectalis (strain ATCC 33656 / DSM 3377 / JCM 17463 / KCTC 5835 / VPI 0990) (Eubacterium rectale).